A 723-amino-acid chain; its full sequence is Cyclin-T2 (723 aa).

Positions 1–298 (MASGRGASSR…SVTGVPANPS (298 aa)) are interaction with MDFIC and MDFI. The region spanning 12-147 (FFTREQLENT…IMLQTLGFEI (136 aa)) is the Cyclin N-terminal domain. The interval 250–298 (RLKRIRNWRAMAKKPKVDGQVSETPLLGSSLVQNSILVDSVTGVPANPS) is interaction with POLR2A. 2 stretches are compositionally biased toward polar residues: residues 297–307 (PSFQKPSTSTF) and 314–325 (NSGSTSVQDSRA). Disordered stretches follow at residues 297-325 (PSFQ…DSRA), 340-364 (SYSL…VYTQ), 385-428 (ALHS…GMLP), and 458-645 (AEQQ…SSVK). Over residues 395–409 (DKVADHSSAKQEYTH) the composition is skewed to basic and acidic residues. Lysine 404 participates in a covalent cross-link: Glycyl lysine isopeptide (Lys-Gly) (interchain with G-Cter in SUMO2). Residue serine 477 is modified to Phosphoserine. 3 stretches are compositionally biased toward basic and acidic residues: residues 489–503 (DRPE…ERSG), 517–543 (GPSK…EGSG), and 552–565 (ISRD…EHPA). Positions 566-576 (NRHHSSHKYLH) are enriched in basic residues. Residue serine 596 is modified to Phosphoserine. Residues 631–645 (SSKSAGSSSSSSSVK) show a composition bias toward low complexity.

Belongs to the cyclin family. Cyclin C subfamily. In terms of assembly, interacts with CDK9 to form P-TEFb. Interacts with POLR2A (via the C-terminal domain (CTD)); mediates transcriptional activity. Interacts with HEXIM1; mediates formation of a tripartite complex with KPNA2. Interacts with HEXIM2. Interacts with PKN1; enhances MYOD1-dependent transcription. P-TEFB complex interacts with RB1; promotes phosphorylation of RB1. P-TEFB complex interacts with MYOD1; promotes the transcriptional activity of MYOD1 through its CDK9-mediated phosphorylation. Interacts with MDFI and MDFIC. As to expression, highly expressed in all phases of skeletal muscle differentiation, particularly in later stages. Highly expressed in skeletal muscle. Significantly expressed in heart, brain, kidney, liver, testis, and pancreas.

The protein resides in the cytoplasm. Its subcellular location is the perinuclear region. It localises to the nucleus. Regulatory subunit of the cyclin-dependent kinase pair (CDK9/cyclin T) complex, also called positive transcription elongation factor B (P-TEFB), which is proposed to facilitate the transition from abortive to production elongation by phosphorylating the CTD (carboxy-terminal domain) of the large subunit of RNA polymerase II (RNAP II). The activity of this complex is regulated by binding with 7SK snRNA. Plays a role during muscle differentiation; P-TEFB complex interacts with MYOD1; this tripartite complex promotes the transcriptional activity of MYOD1 through its CDK9-mediated phosphorylation and binds the chromatin of promoters and enhancers of muscle-specific genes; this event correlates with hyperphosphorylation of the CTD domain of RNA pol II. In addition, enhances MYOD1-dependent transcription through interaction with PKN1. Involved in early embryo development. This Mus musculus (Mouse) protein is Cyclin-T2.